The chain runs to 256 residues: Alcohol dehydrogenase (256 aa).

12 to 35 (FVAGLGGIGLDTSKELVKRDLKNL) is an NAD(+) binding site. Ser-140 is a substrate binding site. Tyr-153 functions as the Proton acceptor in the catalytic mechanism.

Belongs to the short-chain dehydrogenases/reductases (SDR) family. Homodimer.

The enzyme catalyses a primary alcohol + NAD(+) = an aldehyde + NADH + H(+). It catalyses the reaction a secondary alcohol + NAD(+) = a ketone + NADH + H(+). The sequence is that of Alcohol dehydrogenase (Adh) from Drosophila erecta (Fruit fly).